The chain runs to 795 residues: Outer membrane protein assembly factor BamA (795 aa).

The N-terminal stretch at 1-19 is a signal peptide; that stretch reads MKKLLIASLLFGTTTTVFA. POTRA domains are found at residues 22–89, 90–170, 173–259, 262–341, and 344–418; these read FVAK…VVAK, SIIS…INED, AKLA…VNEG, YDLR…VDAG, and LTVR…VKER.

It belongs to the BamA family. As to quaternary structure, part of the Bam complex.

The protein resides in the cell outer membrane. Part of the outer membrane protein assembly complex, which is involved in assembly and insertion of beta-barrel proteins into the outer membrane. The protein is Outer membrane protein assembly factor BamA of Haemophilus influenzae (strain ATCC 51907 / DSM 11121 / KW20 / Rd).